The primary structure comprises 813 residues: Probable receptor-like protein kinase At5g39020 (813 aa).

The N-terminal stretch at 1–21 (MNCNVLFLLSVLVSVTAGVTA) is a signal peptide. At 22–437 (AYHPTDVFLF…TPPIKGKPHV (416 aa)) the chain is on the extracellular side. N-linked (GlcNAc...) asparagine glycans are attached at residues Asn46, Asn61, Asn165, Asn202, Asn213, Asn263, Asn286, Asn293, Asn384, and Asn401. A helical transmembrane segment spans residues 438–458 (LVIILIVVGSVIGLATFIVII). Residues 459-813 (MLLIRQMKRK…QTQTLDSTII (355 aa)) are Cytoplasmic-facing. The region spanning 496-771 (KSFSHTVGKG…KVVEMIEGSL (276 aa)) is the Protein kinase domain. Residues 502–510 (VGKGGFGTV) and Lys524 contribute to the ATP site. Asp619 functions as the Proton acceptor in the catalytic mechanism. Positions 791-813 (ESSSLSDGQEAEKQTQTLDSTII) are disordered. Residues 804–813 (QTQTLDSTII) show a composition bias toward polar residues.

This sequence belongs to the protein kinase superfamily. Ser/Thr protein kinase family.

Its subcellular location is the membrane. The protein is Probable receptor-like protein kinase At5g39020 of Arabidopsis thaliana (Mouse-ear cress).